The chain runs to 347 residues: Protein RecA (347 aa).

Residue 65–72 (GPESSGKT) participates in ATP binding.

The protein belongs to the RecA family.

The protein resides in the cytoplasm. Can catalyze the hydrolysis of ATP in the presence of single-stranded DNA, the ATP-dependent uptake of single-stranded DNA by duplex DNA, and the ATP-dependent hybridization of homologous single-stranded DNAs. It interacts with LexA causing its activation and leading to its autocatalytic cleavage. The protein is Protein RecA of Marinobacter nauticus (strain ATCC 700491 / DSM 11845 / VT8) (Marinobacter aquaeolei).